The following is a 398-amino-acid chain: CCA-adding enzyme (398 aa).

ATP is bound by residues Gly32 and Arg35. Residues Gly32 and Arg35 each contribute to the CTP site. Mg(2+) contacts are provided by Asp45 and Asp47. The ATP site is built by Arg116, Asp159, Arg162, Arg165, and Arg168. Residues Arg116, Asp159, Arg162, Arg165, and Arg168 each coordinate CTP.

Belongs to the tRNA nucleotidyltransferase/poly(A) polymerase family. Bacterial CCA-adding enzyme type 3 subfamily. In terms of assembly, homodimer. Mg(2+) serves as cofactor.

The enzyme catalyses a tRNA precursor + 2 CTP + ATP = a tRNA with a 3' CCA end + 3 diphosphate. The catalysed reaction is a tRNA with a 3' CCA end + 2 CTP + ATP = a tRNA with a 3' CCACCA end + 3 diphosphate. Its function is as follows. Catalyzes the addition and repair of the essential 3'-terminal CCA sequence in tRNAs without using a nucleic acid template. Adds these three nucleotides in the order of C, C, and A to the tRNA nucleotide-73, using CTP and ATP as substrates and producing inorganic pyrophosphate. tRNA 3'-terminal CCA addition is required both for tRNA processing and repair. Also involved in tRNA surveillance by mediating tandem CCA addition to generate a CCACCA at the 3' terminus of unstable tRNAs. While stable tRNAs receive only 3'-terminal CCA, unstable tRNAs are marked with CCACCA and rapidly degraded. In Lacticaseibacillus paracasei (strain ATCC 334 / BCRC 17002 / CCUG 31169 / CIP 107868 / KCTC 3260 / NRRL B-441) (Lactobacillus paracasei), this protein is CCA-adding enzyme.